A 591-amino-acid chain; its full sequence is Aspartate--tRNA(Asp/Asn) ligase (591 aa).

Residue Glu-174 coordinates L-aspartate. Residues 198–201 (QLFK) are aspartate. Arg-220 is an L-aspartate binding site. ATP is bound by residues 220-222 (RDE) and Gln-229. An L-aspartate-binding site is contributed by His-450. ATP is bound at residue Glu-483. Arg-490 contacts L-aspartate. 535–538 (GLDR) provides a ligand contact to ATP.

The protein belongs to the class-II aminoacyl-tRNA synthetase family. Type 1 subfamily. Homodimer.

It localises to the cytoplasm. The enzyme catalyses tRNA(Asx) + L-aspartate + ATP = L-aspartyl-tRNA(Asx) + AMP + diphosphate. In terms of biological role, aspartyl-tRNA synthetase with relaxed tRNA specificity since it is able to aspartylate not only its cognate tRNA(Asp) but also tRNA(Asn). Reaction proceeds in two steps: L-aspartate is first activated by ATP to form Asp-AMP and then transferred to the acceptor end of tRNA(Asp/Asn). This Pseudomonas aeruginosa (strain LESB58) protein is Aspartate--tRNA(Asp/Asn) ligase.